The following is a 616-amino-acid chain: Putative L-type lectin-domain containing receptor kinase I.10 (616 aa).

The first 22 residues, 1–22 (MAWGLFQILMISFFHLIKLSSQ), serve as a signal peptide directing secretion. Topologically, residues 23 to 288 (QETSFVYETF…RAEHKNLSPL (266 aa)) are extracellular. The legume-lectin like stretch occupies residues 24–258 (ETSFVYETFR…YQYVLSWSFS (235 aa)). N-linked (GlcNAc...) asparagine glycosylation is found at Asn56, Asn124, Asn181, Asn204, and Asn225. The chain crosses the membrane as a helical span at residues 289-309 (FIDLLGFLAIMGLCTLTGMYF). Topologically, residues 310–616 (FKRGKYAEIT…SAASSATNSP (307 aa)) are cytoplasmic. Residues 343–616 (FHKDGFLGKG…SAASSATNSP (274 aa)) form the Protein kinase domain. ATP contacts are provided by residues 349-357 (LGKGGFGEV) and Lys371. Asp467 serves as the catalytic Proton acceptor.

In the C-terminal section; belongs to the protein kinase superfamily. Ser/Thr protein kinase family. This sequence in the N-terminal section; belongs to the leguminous lectin family.

It is found in the cell membrane. The enzyme catalyses L-seryl-[protein] + ATP = O-phospho-L-seryl-[protein] + ADP + H(+). It catalyses the reaction L-threonyl-[protein] + ATP = O-phospho-L-threonyl-[protein] + ADP + H(+). This chain is Putative L-type lectin-domain containing receptor kinase I.10 (LECRK110), found in Arabidopsis thaliana (Mouse-ear cress).